Consider the following 782-residue polypeptide: E3 ubiquitin-protein ligase SopA (782 aa).

The interval 136-171 is disordered; it reads GVSVSANNRPTVSEGRTPPVSPSLSLQATSSPSSPA. A compositionally biased stretch (low complexity) spans 157-171; the sequence is PSLSLQATSSPSSPA. Catalysis depends on cysteine 753, which acts as the Glycyl thioester intermediate.

This sequence belongs to the SopA E3 ligase family. In terms of processing, ubiquitinated in the presence of host E1 ubiquitin-activating enzyme, E2 ubiquitin-conjugating enzyme and ubiquitin.

The protein resides in the secreted. It is found in the host cell. The enzyme catalyses S-ubiquitinyl-[E2 ubiquitin-conjugating enzyme]-L-cysteine + [acceptor protein]-L-lysine = [E2 ubiquitin-conjugating enzyme]-L-cysteine + N(6)-ubiquitinyl-[acceptor protein]-L-lysine.. Effector proteins function to alter host cell physiology and promote bacterial survival in host tissues. This protein is an E3 ubiquitin ligase that interferes with host's ubiquitination pathway. For instance, prevents host innate immune response by ubiquitinating and thus sending to degradation host E3 ubiquitin ligases TRIM56 and TRIM65. The polypeptide is E3 ubiquitin-protein ligase SopA (sopA) (Salmonella typhimurium (strain D23580)).